A 369-amino-acid polypeptide reads, in one-letter code: Phenylalanine--tRNA ligase alpha subunit (369 aa).

Glu269 lines the Mg(2+) pocket.

This sequence belongs to the class-II aminoacyl-tRNA synthetase family. Phe-tRNA synthetase alpha subunit type 1 subfamily. In terms of assembly, tetramer of two alpha and two beta subunits. Requires Mg(2+) as cofactor.

The protein localises to the cytoplasm. The enzyme catalyses tRNA(Phe) + L-phenylalanine + ATP = L-phenylalanyl-tRNA(Phe) + AMP + diphosphate + H(+). The polypeptide is Phenylalanine--tRNA ligase alpha subunit (Nitrobacter winogradskyi (strain ATCC 25391 / DSM 10237 / CIP 104748 / NCIMB 11846 / Nb-255)).